The sequence spans 154 residues: Toxin YhaV (154 aa).

As to quaternary structure, homohexamer; forms a complex with PrlF (SohA) with stoichiometry PrlF(2)-YhaV(4), possibly as a YhaV(2)-PrlF(2)-YhaV(2) complex like the MazFE complex. May dimerize in solution.

Toxic component of a type II toxin-antitoxin (TA) system. Has RNase activity in vitro. Acts as a transcription factor. The YhaV/PrlF complex binds the prlF-yhaV operon, probably negatively regulating its expression. The chain is Toxin YhaV (yhaV) from Escherichia coli O6:H1 (strain CFT073 / ATCC 700928 / UPEC).